The primary structure comprises 384 residues: PqqA peptide cyclase (384 aa).

One can recognise a Radical SAM core domain in the interval 15 to 231 (PGPPLWLLAE…NQWRDKLAAE (217 aa)). [4Fe-4S] cluster contacts are provided by Cys-29, Cys-33, and Cys-36.

This sequence belongs to the radical SAM superfamily. PqqE family. Interacts with PqqD. The interaction is necessary for activity of PqqE. [4Fe-4S] cluster is required as a cofactor.

The enzyme catalyses [PQQ precursor protein] + S-adenosyl-L-methionine = E-Y cross-linked-[PQQ precursor protein] + 5'-deoxyadenosine + L-methionine + H(+). The protein operates within cofactor biosynthesis; pyrroloquinoline quinone biosynthesis. Its function is as follows. Catalyzes the cross-linking of a glutamate residue and a tyrosine residue in the PqqA protein as part of the biosynthesis of pyrroloquinoline quinone (PQQ). The chain is PqqA peptide cyclase from Ectopseudomonas mendocina (strain ymp) (Pseudomonas mendocina).